We begin with the raw amino-acid sequence, 190 residues long: Protein GrpE (190 aa).

A disordered region spans residues 1-41; that stretch reads MAKEKQEEQQKQTAPENEKAPKKDIKKEASDKKGDQTSKLK.

This sequence belongs to the GrpE family. As to quaternary structure, homodimer.

It localises to the cytoplasm. Participates actively in the response to hyperosmotic and heat shock by preventing the aggregation of stress-denatured proteins, in association with DnaK and GrpE. It is the nucleotide exchange factor for DnaK and may function as a thermosensor. Unfolded proteins bind initially to DnaJ; upon interaction with the DnaJ-bound protein, DnaK hydrolyzes its bound ATP, resulting in the formation of a stable complex. GrpE releases ADP from DnaK; ATP binding to DnaK triggers the release of the substrate protein, thus completing the reaction cycle. Several rounds of ATP-dependent interactions between DnaJ, DnaK and GrpE are required for fully efficient folding. The sequence is that of Protein GrpE from Limosilactobacillus reuteri (strain DSM 20016) (Lactobacillus reuteri).